The sequence spans 564 residues: Plant UBX domain-containing protein 8 (564 aa).

Ala2 bears the N-acetylalanine mark. The UBA-like domain occupies 2–44 (ATPNQEAIDTFISITGASDAVALQKLEEHRGDLNQAVNAYFSE). UIM domains are found at residues 198 to 217 (IEEEMIRAAIEASKKEAEGS) and 230 to 249 (EDDDDIAIAVTMSLKSAEEE). Residues 210–229 (SKKEAEGSSNPLLEERPLHM) form a disordered region. Disordered stretches follow at residues 267–358 (AVTA…EEHD), 371–423 (IPET…DKEM), and 443–483 (FLEE…QADE). Over residues 291–300 (FDDDSDDVDE) the composition is skewed to acidic residues. 4 positions are modified to phosphoserine: Ser295, Ser324, Ser326, and Ser328. Positions 322–334 (DRSRSGSPEEEHA) are enriched in basic and acidic residues. Residues 381 to 395 (FLPPQPRAQPRPPSP) are compositionally biased toward pro residues. Residues 412–478 (VASLQADRDK…DAKEASLPKE (67 aa)) adopt a coiled-coil conformation. Basic and acidic residues predominate over residues 443–475 (FLEEEKKKEEEAQRKLEEEQELERQLDAKEASL). Positions 482-560 (DEENAITLLI…GLTSKQEALF (79 aa)) constitute a UBX domain.

In terms of assembly, interacts with RABA5C/ARA-4.

The polypeptide is Plant UBX domain-containing protein 8 (Arabidopsis thaliana (Mouse-ear cress)).